Reading from the N-terminus, the 493-residue chain is Leucine-rich repeat-containing protein 14 (493 aa).

Residues 111–146 (KHTLRVLDMTGLLDDGVEQDPGTMSMWDCTAAVART) form an LRR 1; degenerate repeat. An LRR 2; degenerate repeat occupies 194 to 218 (RLCCRDLRAEDLPMRNTVALLQLLD). One copy of the LRR 3; degenerate repeat lies at 219–246 (AGCLRRIDLRFNNLGLRGLSVIIPHVAR). An LRR 4; degenerate repeat occupies 247 to 282 (FQHLASLRLHYVHGDSRQPSVDGEDNFRYFLAQMGR). LRR repeat units lie at residues 283–307 (FICL…LSTL), 308–339 (QRPL…AHLK), 340–360 (KLDL…QGLL), 364–391 (AATL…TLTR), and 392–416 (CASL…LLRD).

Belongs to the PRAME family. LRRC14 subfamily. As to quaternary structure, interacts with IKBKB; disrupts IKBKB-IKBKG interaction preventing I-kappa-B-kinase (IKK) core complex formation and leading to a decrease of IKBKB phosphorylation and NF-kappaB activation. Interacts with CHUK.

It is found in the cytoplasm. Its function is as follows. Negatively regulates Toll-like receptor-mediated NF-kappa-B signaling by disrupting IKK core complex formation through interaction with IKBKB. This chain is Leucine-rich repeat-containing protein 14, found in Rattus norvegicus (Rat).